A 110-amino-acid chain; its full sequence is Small ribosomal subunit protein bS16 (110 aa).

The span at 81-104 (VRPAEVLGKQKQEKERSAKKKDAA) shows a compositional bias: basic and acidic residues. Residues 81-110 (VRPAEVLGKQKQEKERSAKKKDAAASETSE) are disordered.

This sequence belongs to the bacterial ribosomal protein bS16 family.

The protein is Small ribosomal subunit protein bS16 of Prochlorococcus marinus (strain NATL2A).